Reading from the N-terminus, the 87-residue chain is Large ribosomal subunit protein bL27 (87 aa).

A disordered region spans residues methionine 1–glycine 22.

Belongs to the bacterial ribosomal protein bL27 family.

In Nitratidesulfovibrio vulgaris (strain DP4) (Desulfovibrio vulgaris), this protein is Large ribosomal subunit protein bL27.